Here is a 370-residue protein sequence, read N- to C-terminus: Homoserine O-acetyltransferase (370 aa).

Residues 44-350 form the AB hydrolase-1 domain; sequence NAILVAHAWT…AYGHDAFLLE (307 aa). S150 functions as the Nucleophile in the catalytic mechanism. Residue R217 coordinates substrate. Active-site residues include D311 and H344. D345 serves as a coordination point for substrate.

Belongs to the AB hydrolase superfamily. MetX family. Homodimer.

The protein localises to the cytoplasm. It carries out the reaction L-homoserine + acetyl-CoA = O-acetyl-L-homoserine + CoA. It participates in amino-acid biosynthesis; L-methionine biosynthesis via de novo pathway; O-acetyl-L-homoserine from L-homoserine: step 1/1. In terms of biological role, transfers an acetyl group from acetyl-CoA to L-homoserine, forming acetyl-L-homoserine. This chain is Homoserine O-acetyltransferase, found in Geotalea uraniireducens (strain Rf4) (Geobacter uraniireducens).